A 354-amino-acid polypeptide reads, in one-letter code: Rhodopsin (354 aa).

The Extracellular segment spans residues 1–36 (MNGTEGPYFYIPMVNTTGIVRSPYEYPQYYLVNPAA). N-linked (GlcNAc...) asparagine glycosylation is found at N2 and N15. Residues 37 to 61 (YAALGAYMFFLILLGFPINFLTLYV) form a helical membrane-spanning segment. Residues 62 to 73 (TLEHKKLRTPLN) lie on the Cytoplasmic side of the membrane. The chain crosses the membrane as a helical span at residues 74 to 96 (YILLNLAVADLFMVFGGFTTTMY). The Extracellular portion of the chain corresponds to 97–110 (TSMHGYFVLGRLGC). C110 and C187 are joined by a disulfide. A helical membrane pass occupies residues 111–133 (NLEGFFATLGGEIGLWSLVVLAI). Residues 134–136 (ERW) carry the 'Ionic lock' involved in activated form stabilization motif. Over 134 to 152 (ERWVVVCKPISNFRFGENH) the chain is Cytoplasmic. A helical membrane pass occupies residues 153-173 (AIMGLAFTWIMACACAVPPLV). Residues 174–202 (GWSRYIPEGMQCSCGVDYYTRAEGFNNES) lie on the Extracellular side of the membrane. N200 carries N-linked (GlcNAc...) asparagine glycosylation. A helical membrane pass occupies residues 203–224 (FVVYMFTCHFCIPLTIIGFCYG). Residues 225-252 (RLLCAVKEAAAAQQESETTQRAEREVTR) are Cytoplasmic-facing. A helical transmembrane segment spans residues 253–274 (MVILMVVGFLVCWLPYASVAWY). Residues 275–286 (IFSNQGSQFGPL) are Extracellular-facing. The helical transmembrane segment at 287-308 (FMTIPAFFAKSSSVYNPMIYIC) threads the bilayer. K296 carries the N6-(retinylidene)lysine modification. The Cytoplasmic portion of the chain corresponds to 309–354 (MNKQFRHCMITTLCCGKNPFEEEEGASTTASKTEASSVSSSSVSPA). Residues C322 and C323 are each lipidated (S-palmitoyl cysteine). A disordered region spans residues 333–354 (GASTTASKTEASSVSSSSVSPA). The segment covering 334-354 (ASTTASKTEASSVSSSSVSPA) has biased composition (low complexity).

This sequence belongs to the G-protein coupled receptor 1 family. Opsin subfamily. In terms of processing, phosphorylated on some or all of the serine and threonine residues present in the C-terminal region. Contains one covalently linked retinal chromophore.

The protein localises to the membrane. It is found in the cell projection. Its subcellular location is the cilium. It localises to the photoreceptor outer segment. Functionally, photoreceptor required for image-forming vision at low light intensity. While most salt water fish species use retinal as chromophore, most freshwater fish use 3-dehydroretinal, or a mixture of retinal and 3-dehydroretinal. Light-induced isomerization of 11-cis to all-trans retinal triggers a conformational change that activates signaling via G-proteins. Subsequent receptor phosphorylation mediates displacement of the bound G-protein alpha subunit by arrestin and terminates signaling. The sequence is that of Rhodopsin (rho) from Salaria pavo (Peacock blenny).